A 24-amino-acid polypeptide reads, in one-letter code: Frenatin-4 (24 aa).

Expressed by the skin glands.

Its subcellular location is the secreted. In terms of biological role, very weak antimicrobial peptide since it does not show activity below 100 ug/ml against Bacillus cereus, Escherichia coli, Leuconostoc mesenteroides, Micrococcus luteus, Pastewella haemolytica, Staphylococcus aureus, Streptococcus faecalis and Streptococcus uberis. This Nyctimystes infrafrenatus (White-lipped tree frog) protein is Frenatin-4.